The chain runs to 293 residues: Protease HtpX (293 aa).

The next 2 membrane-spanning stretches (helical) occupy residues 4-24 and 33-53; these read ISLFLLTNLAVMVVFGIVLSL and AGLMIMAGLFGFGGAFVSLLM. His-139 lines the Zn(2+) pocket. Glu-140 is a catalytic residue. Residue His-143 coordinates Zn(2+). A run of 2 helical transmembrane segments spans residues 158–178 and 193–213; these read VVNTFVIFISRILAQLAAGFM and LVYFAVSMVLELVFGVLASII. Glu-222 lines the Zn(2+) pocket.

Belongs to the peptidase M48B family. Requires Zn(2+) as cofactor.

The protein resides in the cell inner membrane. The polypeptide is Protease HtpX (Sodalis glossinidius (strain morsitans)).